Consider the following 200-residue polypeptide: Holliday junction branch migration complex subunit RuvA (200 aa).

Residues 1-64 (MYAYFRGELI…EDLMQLYGFI (64 aa)) are domain I. Residues 65 to 143 (EEEERQLFLL…KLQQTRPGKT (79 aa)) are domain II. The flexible linker stretch occupies residues 144 to 154 (AGAGSVASLSE). Residues 154–200 (EDALQALMTLGFSRASAQQAVTRALLSAENPGVEDIVREALQNIRNH) are domain III.

The protein belongs to the RuvA family. As to quaternary structure, homotetramer. Forms an RuvA(8)-RuvB(12)-Holliday junction (HJ) complex. HJ DNA is sandwiched between 2 RuvA tetramers; dsDNA enters through RuvA and exits via RuvB. An RuvB hexamer assembles on each DNA strand where it exits the tetramer. Each RuvB hexamer is contacted by two RuvA subunits (via domain III) on 2 adjacent RuvB subunits; this complex drives branch migration. In the full resolvosome a probable DNA-RuvA(4)-RuvB(12)-RuvC(2) complex forms which resolves the HJ.

It localises to the cytoplasm. Functionally, the RuvA-RuvB-RuvC complex processes Holliday junction (HJ) DNA during genetic recombination and DNA repair, while the RuvA-RuvB complex plays an important role in the rescue of blocked DNA replication forks via replication fork reversal (RFR). RuvA specifically binds to HJ cruciform DNA, conferring on it an open structure. The RuvB hexamer acts as an ATP-dependent pump, pulling dsDNA into and through the RuvAB complex. HJ branch migration allows RuvC to scan DNA until it finds its consensus sequence, where it cleaves and resolves the cruciform DNA. The sequence is that of Holliday junction branch migration complex subunit RuvA from Prosthecochloris aestuarii (strain DSM 271 / SK 413).